The chain runs to 299 residues: MSPLDRTPPSLRGQDGEGSVQVHQDETAKIEGAKVFSVYGKGGIGKSTTSSNLSAAFSMLGKRVLQIGCDPKHDSTFTLTGSLVPTVIDILKEVDFHPEELRAEDFVFDGFNGVKCVEAGGPPAGTGCGGYVVGQTVKLLKQHHMLEDTDVVIFDVLGDVVCGGFAAPLQHADRALIVTANDFDSIYAMNRIIAAVQAKSKNYKVRLAGCVANRSRETDEVDRYCDTVGFNRIAHMPDLDAIRRSRLKKKTLFEMPDDEEIVQVRKEYIRLAETLWNGTEPLAPAPLPDRDIFELLGFD.

The segment at 1-23 (MSPLDRTPPSLRGQDGEGSVQVH) is disordered. Residues 43-48 (GIGKST) and Lys72 each bind ATP. Ser47 contacts Mg(2+). [4Fe-4S] cluster-binding residues include Cys128 and Cys162. ATP contacts are provided by residues 213–214 (NR) and 237–239 (PDL).

This sequence belongs to the NifH/BchL/ChlL family. As to quaternary structure, homodimer. Protochlorophyllide reductase is composed of three subunits; BchL, BchN and BchB. Requires [4Fe-4S] cluster as cofactor.

It carries out the reaction chlorophyllide a + oxidized 2[4Fe-4S]-[ferredoxin] + 2 ADP + 2 phosphate = protochlorophyllide a + reduced 2[4Fe-4S]-[ferredoxin] + 2 ATP + 2 H2O. Its pathway is porphyrin-containing compound metabolism; bacteriochlorophyll biosynthesis (light-independent). Functionally, component of the dark-operative protochlorophyllide reductase (DPOR) that uses Mg-ATP and reduced ferredoxin to reduce ring D of protochlorophyllide (Pchlide) to form chlorophyllide a (Chlide). This reaction is light-independent. The L component serves as a unique electron donor to the NB-component of the complex, and binds Mg-ATP. The sequence is that of Light-independent protochlorophyllide reductase iron-sulfur ATP-binding protein from Roseobacter denitrificans (strain ATCC 33942 / OCh 114) (Erythrobacter sp. (strain OCh 114)).